The following is a 311-amino-acid chain: VQ motif-containing protein 9 (311 aa).

Over residues 1 to 27 (MDKSCNSSGDSSAVSASATSSTGNNTT) the composition is skewed to low complexity. Residues 1 to 78 (MDKSCNSSGD…QINQGNLHQH (78 aa)) form a disordered region. The VQ motif lies at 90–99 (FRDVVQKLTG). Disordered stretches follow at residues 103-125 (HERI…SSRL), 228-266 (QQEN…PPLF), and 290-311 (GQLG…YKGH). Over residues 240–249 (FPPPHPPPPS) the composition is skewed to pro residues. The segment covering 290-302 (GQLGFPVSPTTVP) has biased composition (low complexity).

In terms of assembly, interacts (via N-terminus) with WRKY8. As to expression, highly expressed in roots and at lower levels in rosette leaves, cauline leaves, stems, flowers and siliques.

The protein resides in the nucleus. Its function is as follows. Functions as a negative regulator of salt stress response. Functions as a repressor of WRKY8 transcription factor by decreasing the DNA-binding activity of WRKY8 and acts antagonistically with WRKY8 to regulate sodium and potassium homeostasis under salt stress. In Arabidopsis thaliana (Mouse-ear cress), this protein is VQ motif-containing protein 9.